The primary structure comprises 94 residues: Small ribosomal subunit protein uS19 (94 aa).

This sequence belongs to the universal ribosomal protein uS19 family.

Functionally, protein S19 forms a complex with S13 that binds strongly to the 16S ribosomal RNA. This chain is Small ribosomal subunit protein uS19, found in Moorella thermoacetica (strain ATCC 39073 / JCM 9320).